The following is a 388-amino-acid chain: Pregnancy-associated glycoprotein (388 aa).

Residues 1 to 15 form the signal peptide; that stretch reads MKWFGVLGLVTLSEC. Residues 74–385 form the Peptidase A1 domain; that stretch reads YMGIISVGTP…DRENDRIGLA (312 aa). Residue aspartate 92 is part of the active site. 2 disulfides stabilise this stretch: cysteine 105–cysteine 110 and cysteine 266–cysteine 270. Aspartate 275 is a catalytic residue. Residues cysteine 309 and cysteine 344 are joined by a disulfide bond. Residue asparagine 356 is glycosylated (N-linked (GlcNAc...) asparagine).

This sequence belongs to the peptidase A1 family. Trophoblast and placental tissue.

It localises to the secreted. The protein localises to the extracellular space. This chain is Pregnancy-associated glycoprotein (PAG), found in Equus caballus (Horse).